Consider the following 178-residue polypeptide: ATP synthase subunit delta (178 aa).

This sequence belongs to the ATPase delta chain family. In terms of assembly, F-type ATPases have 2 components, F(1) - the catalytic core - and F(0) - the membrane proton channel. F(1) has five subunits: alpha(3), beta(3), gamma(1), delta(1), epsilon(1). F(0) has three main subunits: a(1), b(2) and c(10-14). The alpha and beta chains form an alternating ring which encloses part of the gamma chain. F(1) is attached to F(0) by a central stalk formed by the gamma and epsilon chains, while a peripheral stalk is formed by the delta and b chains.

Its subcellular location is the cell membrane. In terms of biological role, f(1)F(0) ATP synthase produces ATP from ADP in the presence of a proton or sodium gradient. F-type ATPases consist of two structural domains, F(1) containing the extramembraneous catalytic core and F(0) containing the membrane proton channel, linked together by a central stalk and a peripheral stalk. During catalysis, ATP synthesis in the catalytic domain of F(1) is coupled via a rotary mechanism of the central stalk subunits to proton translocation. Its function is as follows. This protein is part of the stalk that links CF(0) to CF(1). It either transmits conformational changes from CF(0) to CF(1) or is implicated in proton conduction. In Polynucleobacter asymbioticus (strain DSM 18221 / CIP 109841 / QLW-P1DMWA-1) (Polynucleobacter necessarius subsp. asymbioticus), this protein is ATP synthase subunit delta.